The primary structure comprises 337 residues: Ornithine carbamoyltransferase, catabolic (337 aa).

Residues 57–60 (STRT), Q84, R108, and 135–138 (HPTQ) each bind carbamoyl phosphate. Residues N167, D231, and 235 to 236 (SM) contribute to the L-ornithine site. Carbamoyl phosphate is bound by residues 272 to 273 (CL) and R317.

It belongs to the aspartate/ornithine carbamoyltransferase superfamily. OTCase family.

It localises to the cytoplasm. The catalysed reaction is carbamoyl phosphate + L-ornithine = L-citrulline + phosphate + H(+). The protein operates within amino-acid degradation; L-arginine degradation via ADI pathway; carbamoyl phosphate from L-arginine: step 2/2. Its function is as follows. Reversibly catalyzes the transfer of the carbamoyl group from carbamoyl phosphate (CP) to the N(epsilon) atom of ornithine (ORN) to produce L-citrulline. The sequence is that of Ornithine carbamoyltransferase, catabolic from Streptococcus suis (strain 89/1591).